Here is a 294-residue protein sequence, read N- to C-terminus: Probable HTH-type transcriptional regulator LrrA (294 aa).

An HTH lysR-type domain is found at 1-58 (MNITQLQILAAVVETGNFSAAALQLDLSQSAVSRAIAALEDELGVVLLSRGRFGARPT). The segment at residues 18–37 (FSAAALQLDLSQSAVSRAIA) is a DNA-binding region (H-T-H motif).

Belongs to the LysR transcriptional regulatory family.

This chain is Probable HTH-type transcriptional regulator LrrA (lrrA), found in Synechococcus elongatus (strain ATCC 33912 / PCC 7942 / FACHB-805) (Anacystis nidulans R2).